Here is a 356-residue protein sequence, read N- to C-terminus: Alanine racemase (356 aa).

The Proton acceptor; specific for D-alanine role is filled by Lys-35. Lys-35 is subject to N6-(pyridoxal phosphate)lysine. Substrate is bound at residue Arg-130. Tyr-253 acts as the Proton acceptor; specific for L-alanine in catalysis. Met-301 is a binding site for substrate.

Belongs to the alanine racemase family. It depends on pyridoxal 5'-phosphate as a cofactor.

The catalysed reaction is L-alanine = D-alanine. Its pathway is amino-acid biosynthesis; D-alanine biosynthesis; D-alanine from L-alanine: step 1/1. Its function is as follows. Catalyzes the interconversion of L-alanine and D-alanine. May also act on other amino acids. The polypeptide is Alanine racemase (alr) (Paraburkholderia phytofirmans (strain DSM 17436 / LMG 22146 / PsJN) (Burkholderia phytofirmans)).